The following is a 230-amino-acid chain: UPF0494 membrane protein C1348.07 (230 aa).

Helical transmembrane passes span 78–98, 120–140, and 148–168; these read WPLL…NFEV, IWGP…GLIY, and AIPL…VAMV.

It belongs to the UPF0494 family.

It is found in the vacuole. Its subcellular location is the membrane. The polypeptide is UPF0494 membrane protein C1348.07 (Schizosaccharomyces pombe (strain 972 / ATCC 24843) (Fission yeast)).